The primary structure comprises 101 residues: Urease subunit gamma (101 aa).

Belongs to the urease gamma subunit family. As to quaternary structure, heterotrimer of UreA (gamma), UreB (beta) and UreC (alpha) subunits. Three heterotrimers associate to form the active enzyme.

It is found in the cytoplasm. The enzyme catalyses urea + 2 H2O + H(+) = hydrogencarbonate + 2 NH4(+). The protein operates within nitrogen metabolism; urea degradation; CO(2) and NH(3) from urea (urease route): step 1/1. This chain is Urease subunit gamma, found in Ureaplasma urealyticum (Ureaplasma urealyticum biotype 2).